The sequence spans 911 residues: Androgen receptor (911 aa).

The interval 1–549 is modulating; that stretch reads MEVQLGLGRV…PIDYYFPPQK (549 aa). Residues 1 to 578 are interaction with ZNF318; that stretch reads MEVQLGLGRV…GSCKVFFKRA (578 aa). 2 disordered regions span residues 35-164 and 192-225; these read QNPG…LSLL and QQQQQEAVSEGSSSGRAREASGAPTSSKDNYLGG. Positions 44 to 88 are enriched in low complexity; that stretch reads AASAAPPGASLLLQQQQQQQQQQQQQQQQQQQQQQETSPRQQQQQ. S81 is subject to Phosphoserine; by CDK9. S93 carries the post-translational modification Phosphoserine. Residues 192-214 show a composition bias toward low complexity; that stretch reads QQQQQEAVSEGSSSGRAREASGA. Over residues 215–225 the composition is skewed to polar residues; that stretch reads PTSSKDNYLGG. Y222 carries the post-translational modification Phosphotyrosine; by CSK. The residue at position 255 (S255) is a Phosphoserine. Position 266 is a phosphotyrosine; by CSK and TNK2 (Y266). A phosphotyrosine; by CSK mark is found at Y306, Y345, Y356, and Y361. A Phosphotyrosine; by CSK and TNK2 modification is found at Y362. K385 participates in a covalent cross-link: Glycyl lysine isopeptide (Lys-Gly) (interchain with G-Cter in SUMO). Y392 bears the Phosphotyrosine; by CSK mark. K512 is covalently cross-linked (Glycyl lysine isopeptide (Lys-Gly) (interchain with G-Cter in SUMO)). Residues Y526 and Y543 each carry the phosphotyrosine; by CSK modification. Residues 543–910 form an interaction with LPXN region; that stretch reads YYFPPQKTCL…GKVKPIYFHT (368 aa). 2 NR C4-type zinc fingers span residues 551 to 571 and 587 to 611; these read CLICGDEASGCHYGALTCGSC and CASRNDCTIDKFRRKNCPSCRLRKC. Residues 551 to 623 constitute a DNA-binding region (nuclear receptor); that stretch reads CLICGDEASG…AGMTLGARKL (73 aa). The interaction with HIPK3 stretch occupies residues 563 to 653; the sequence is YGALTCGSCK…TEETTQKLTV (91 aa). An interaction with CCAR1 region spans residues 583-910; sequence QKYLCASRND…GKVKPIYFHT (328 aa). The segment at 616–910 is interaction with KAT7; sequence MTLGARKLKK…GKVKPIYFHT (295 aa). S642 bears the Phosphoserine; by STK4/MST1 mark. Residues 660 to 891 form the NR LBD domain; that stretch reads ECQPIFLNVL…DFPEMMAEII (232 aa). N697 and R744 together coordinate 17beta-hydroxy-5alpha-androstan-3-one. Glycyl lysine isopeptide (Lys-Gly) (interchain with G-Cter in ubiquitin) cross-links involve residues K837 and K839. Residue T869 participates in 17beta-hydroxy-5alpha-androstan-3-one binding. Y907 is subject to Phosphotyrosine; by CSK.

Belongs to the nuclear hormone receptor family. NR3 subfamily. In terms of assembly, binds DNA as a homodimer. Part of a ternary complex containing AR, EFCAB6/DJBP and PARK7. Interacts with HIPK3 and NR0B2 in the presence of androgen. The ligand binding domain interacts with KAT7/HBO1 in the presence of dihydrotestosterone. Interacts with EFCAB6/DJBP, PQBP1, RANBP9, RBAK, SPDEF, SRA1, TGFB1I1 and RREB1. Interacts with ZMIZ1/ZIMP10 and ZMIZ2/ZMIP7 which both enhance its transactivation activity. Interacts with SLC30A9 and RAD54L2/ARIP4. Interacts with MACROD1 (via macro domain). Interacts via the ligand-binding domain with LXXLL and FXXLF motifs from NCOA1, NCOA2, NCOA3 and MAGEA11. Interacts (via nuclear receptor DNA binding domain and nuclear receptor ligand binding domain) with NCOA4. The AR N-terminal poly-Gln region binds Ran resulting in enhancement of AR-mediated transactivation. Ran-binding decreases as the poly-Gln length increases. Interacts with HIP1 (via coiled coil domain). Interacts (via ligand-binding domain) with TRIM68. Interacts with TNK2. Interacts with USP26. Interacts with RNF6. Interacts (regulated by RNF6 probably through polyubiquitination) with RNF14; regulates AR transcriptional activity. Interacts with PRMT2 and TRIM24. Interacts with RACK1. Interacts with RANBP10; this interaction enhances dihydrotestosterone-induced AR transcriptional activity. Interacts with PRPF6 in a hormone-independent way; this interaction enhances dihydrotestosterone-induced AR transcriptional activity. Interacts with STK4/MST1. Interacts with ZIPK/DAPK3. Interacts with LPXN. Interacts with MAK. Part of a complex containing AR, MAK and NCOA3. Interacts with CRY1. Interacts with CCAR1 and GATA2. Interacts with ZNF318. Interacts with BUD31. Interacts with ARID4A. Interacts with ARID4B. Interacts (via NR LBD domain) with ZBTB7A; the interaction is direct and androgen-dependent. Interacts with NCOR1. Interacts with NCOR2. Interacts with CRY2 in a ligand-dependent manner. Post-translationally, phosphorylated in prostate cancer cells in response to several growth factors including EGF. Phosphorylation is induced by c-Src kinase (CSK). Tyr-526 is one of the major phosphorylation sites and an increase in phosphorylation and Src kinase activity is associated with prostate cancer progression. Phosphorylation by TNK2 enhances the DNA-binding and transcriptional activity. Phosphorylation at Ser-81 by CDK9 regulates AR promoter selectivity and cell growth. In terms of processing, sumoylated on Lys-385 (major) and Lys-512. Ubiquitinated. Deubiquitinated by USP26. 'Lys-6' and 'Lys-27'-linked polyubiquitination by RNF6 modulates AR transcriptional activity and specificity. Palmitoylated by ZDHHC7 and ZDHHC21. Palmitoylation is required for plasma membrane targeting and for rapid intracellular signaling via ERK and AKT kinases and cAMP generation.

Its subcellular location is the nucleus. It is found in the cytoplasm. Functionally, steroid hormone receptors are ligand-activated transcription factors that regulate eukaryotic gene expression and affect cellular proliferation and differentiation in target tissues. Transcription factor activity is modulated by bound coactivator and corepressor proteins like ZBTB7A that recruits NCOR1 and NCOR2 to the androgen response elements/ARE on target genes, negatively regulating androgen receptor signaling and androgen-induced cell proliferation. Transcription activation is also down-regulated by NR0B2. Activated, but not phosphorylated, by HIPK3 and ZIPK/DAPK3. The polypeptide is Androgen receptor (AR) (Pan troglodytes (Chimpanzee)).